A 49-amino-acid polypeptide reads, in one-letter code: Large ribosomal subunit protein bL33B (49 aa).

Belongs to the bacterial ribosomal protein bL33 family.

This is Large ribosomal subunit protein bL33B from Bacillus cytotoxicus (strain DSM 22905 / CIP 110041 / 391-98 / NVH 391-98).